The primary structure comprises 906 residues: Protein translocase subunit SecA (906 aa).

Residues Q89, 107–111 (GEGKT), and D501 contribute to the ATP site. Residues C891, C893, C902, and H903 each coordinate Zn(2+).

The protein belongs to the SecA family. In terms of assembly, monomer and homodimer. Part of the essential Sec protein translocation apparatus which comprises SecA, SecYEG and auxiliary proteins SecDF-YajC and YidC. The cofactor is Zn(2+).

The protein resides in the cell inner membrane. It is found in the cytoplasm. The catalysed reaction is ATP + H2O + cellular proteinSide 1 = ADP + phosphate + cellular proteinSide 2.. Its function is as follows. Part of the Sec protein translocase complex. Interacts with the SecYEG preprotein conducting channel. Has a central role in coupling the hydrolysis of ATP to the transfer of proteins into and across the cell membrane, serving both as a receptor for the preprotein-SecB complex and as an ATP-driven molecular motor driving the stepwise translocation of polypeptide chains across the membrane. The polypeptide is Protein translocase subunit SecA (Parvibaculum lavamentivorans (strain DS-1 / DSM 13023 / NCIMB 13966)).